The following is a 405-amino-acid chain: Deoxyguanosinetriphosphate triphosphohydrolase-like protein (405 aa).

One can recognise an HD domain in the interval 75 to 219 (RLTHTIEVAQ…AAIADDIAYN (145 aa)).

The protein belongs to the dGTPase family. Type 2 subfamily.

The protein is Deoxyguanosinetriphosphate triphosphohydrolase-like protein of Rhizobium johnstonii (strain DSM 114642 / LMG 32736 / 3841) (Rhizobium leguminosarum bv. viciae).